The sequence spans 197 residues: MPIGVPKVPFRLPGEEDAVWVDVNRLYRERLLFLGQQVDDEIANQLIGIMMYLNGEDETQDMYLYINSPGGAVLPGISVYDAMQFVVPDVHTICMGLAASMGSSILTGGEITKRIALPHARVMIHQPASSYYDGQAGECIMEAEEVLKLRDCITKVYVQRTGKPLWVISEDMERDVFMSAEEAKAYGIVDLIALETS.

S100 (nucleophile) is an active-site residue. H125 is a catalytic residue.

The protein belongs to the peptidase S14 family. In terms of assembly, component of the chloroplastic Clp protease core complex.

The protein resides in the plastid. Its subcellular location is the chloroplast stroma. The enzyme catalyses Hydrolysis of proteins to small peptides in the presence of ATP and magnesium. alpha-casein is the usual test substrate. In the absence of ATP, only oligopeptides shorter than five residues are hydrolyzed (such as succinyl-Leu-Tyr-|-NHMec, and Leu-Tyr-Leu-|-Tyr-Trp, in which cleavage of the -Tyr-|-Leu- and -Tyr-|-Trp bonds also occurs).. In terms of biological role, cleaves peptides in various proteins in a process that requires ATP hydrolysis. Has a chymotrypsin-like activity. Plays a major role in the degradation of misfolded proteins. The protein is ATP-dependent Clp protease proteolytic subunit of Angiopteris evecta (Mule's foot fern).